A 246-amino-acid chain; its full sequence is MADS-box transcription factor 14 (246 aa).

Residues 1–61 (MGRGKVQLKR…GKLYEYATDS (61 aa)) form the MADS-box domain. One can recognise a K-box domain in the interval 88–178 (QGNWCHEYRK…QKELVEKQKV (91 aa)). The interval 180–199 (KQQVQWDQTQPQTSSSSSSF) is disordered.

As to quaternary structure, may interact with the K-box of MADS1 and MADS6. Highly expressed in sterile lemmas, at intermediate levels in stamens, and weakly in lemmas, paleas and carpels.

The protein resides in the nucleus. Probable transcription factor. May be involved in the control of flowering time. This Oryza sativa subsp. japonica (Rice) protein is MADS-box transcription factor 14 (MADS14).